The chain runs to 434 residues: Putative D-alanyl-D-alanine carboxypeptidase (434 aa).

Residues 7 to 25 (YLSLLAVSCSVSAAKYPVL) form a helical; Signal-anchor membrane-spanning segment.

It belongs to the peptidase S12 family. YfeW subfamily.

Its subcellular location is the cell inner membrane. The catalysed reaction is Preferential cleavage: (Ac)2-L-Lys-D-Ala-|-D-Ala. Also transpeptidation of peptidyl-alanyl moieties that are N-acyl substituents of D-alanine.. In terms of biological role, penicillin-binding protein. Has low DD-carboxypeptidase activity. This is Putative D-alanyl-D-alanine carboxypeptidase from Escherichia coli (strain K12).